The sequence spans 160 residues: Transcription elongation factor GreA (160 aa).

Positions 4–70 (QKQYPMTQEG…IEQDIQRIEH (67 aa)) form a coiled coil.

It belongs to the GreA/GreB family.

In terms of biological role, necessary for efficient RNA polymerase transcription elongation past template-encoded arresting sites. The arresting sites in DNA have the property of trapping a certain fraction of elongating RNA polymerases that pass through, resulting in locked ternary complexes. Cleavage of the nascent transcript by cleavage factors such as GreA or GreB allows the resumption of elongation from the new 3'terminus. GreA releases sequences of 2 to 3 nucleotides. This is Transcription elongation factor GreA from Staphylococcus carnosus (strain TM300).